We begin with the raw amino-acid sequence, 200 residues long: MSTTIEIPAESSAVAKGKAPLIGASSSSYEKKGGYKKGIAIFDFILRLGAVISALSAAATMGTSDETLPFFTQFFQFEAGYDDFPTFQFFVIAMGFVGGYLVLSLPFSVVAIIRPHAVGIRLLLLILDTVALTLNTAAAAAAAAIVYLAHNGNQSANWLAVCQQFGDFCQKVSGGVVASFVSVLVFLLLVVMSAVALRKH.

The Cytoplasmic segment spans residues 1-38 (MSTTIEIPAESSAVAKGKAPLIGASSSSYEKKGGYKKG). A helical transmembrane segment spans residues 39–59 (IAIFDFILRLGAVISALSAAA). The Extracellular portion of the chain corresponds to 60–88 (TMGTSDETLPFFTQFFQFEAGYDDFPTFQ). The chain crosses the membrane as a helical span at residues 89–109 (FFVIAMGFVGGYLVLSLPFSV). Over 110–121 (VAIIRPHAVGIR) the chain is Cytoplasmic. The helical transmembrane segment at 122 to 142 (LLLLILDTVALTLNTAAAAAA) threads the bilayer. At 143–175 (AAIVYLAHNGNQSANWLAVCQQFGDFCQKVSGG) the chain is on the extracellular side. Residue asparagine 153 is glycosylated (N-linked (GlcNAc...) asparagine). Residues 176-196 (VVASFVSVLVFLLLVVMSAVA) traverse the membrane as a helical segment. Over 197-200 (LRKH) the chain is Cytoplasmic.

The protein belongs to the Casparian strip membrane proteins (CASP) family. Homodimer and heterodimers.

The protein resides in the cell membrane. In terms of biological role, regulates membrane-cell wall junctions and localized cell wall deposition. Required for establishment of the Casparian strip membrane domain (CSD) and the subsequent formation of Casparian strips, a cell wall modification of the root endodermis that determines an apoplastic barrier between the intraorganismal apoplasm and the extraorganismal apoplasm and prevents lateral diffusion. This is Casparian strip membrane protein 1 from Ricinus communis (Castor bean).